The primary structure comprises 293 residues: G1/S-specific cyclin-D3 (293 aa).

The region spanning 27-152 is the Cyclin N-terminal domain; the sequence is VLQSLLRLEE…LVLGKLKWDL (126 aa). Positions 257-293 are disordered; the sequence is REAAQTAPSPVPKAPGGSSSQGPSQTSTPTDVTAIHL. Phosphoserine occurs at positions 265 and 280. Positions 271-286 are enriched in low complexity; sequence PGGSSSQGPSQTSTPT. At Thr284 the chain carries Phosphothreonine.

This sequence belongs to the cyclin family. Cyclin D subfamily. Interacts with the CDK4 and CDK6 protein kinases to form a serine/threonine kinase holoenzyme complex. The cyclin subunit imparts substrate specificity to the complex. Interacts with ATF5. Interacts with EIF3K. Component of the ternary complex cyclin D/CDK4/CDKN1B required for nuclear translocation and modulation of CDK4-mediated kinase activity. Can form similar complexes with either CDKN1A or CDKN2A. Post-translationally, phosphorylation at Thr-284 by MAP kinases is required for ubiquitination and degradation by the DCX(AMBRA1) complex. In terms of processing, ubiquitinated by the DCX(AMBRA1) complex during the transition from G1 to S cell phase, leading to its degradation: ubiquitination is dependent on Thr-284 phosphorylation. The DCX(AMBRA1) complex represents the major regulator of CCND3 stability during the G1/S transition. Polyubiquitinated by the SCF(FBXL2) complex, leading to proteasomal degradation.

It localises to the nucleus. The protein localises to the cytoplasm. Regulatory component of the cyclin D3-CDK4 (DC) complex that phosphorylates and inhibits members of the retinoblastoma (RB) protein family including RB1 and regulates the cell-cycle during G(1)/S transition. Phosphorylation of RB1 allows dissociation of the transcription factor E2F from the RB/E2F complex and the subsequent transcription of E2F target genes which are responsible for the progression through the G(1) phase. Hypophosphorylates RB1 in early G(1) phase. Cyclin D-CDK4 complexes are major integrators of various mitogenenic and antimitogenic signals. Component of the ternary complex, cyclin D3/CDK4/CDKN1B, required for nuclear translocation and activity of the cyclin D-CDK4 complex. Shows transcriptional coactivator activity with ATF5 independently of CDK4. The polypeptide is G1/S-specific cyclin-D3 (Rattus norvegicus (Rat)).